The chain runs to 698 residues: Polyphosphate kinase (698 aa).

Position 63 (asparagine 63) interacts with ATP. The Mg(2+) site is built by arginine 390 and arginine 420. The active-site Phosphohistidine intermediate is the histidine 450. ATP contacts are provided by tyrosine 483, arginine 579, and histidine 607.

This sequence belongs to the polyphosphate kinase 1 (PPK1) family. The cofactor is Mg(2+). In terms of processing, an intermediate of this reaction is the autophosphorylated ppk in which a phosphate is covalently linked to a histidine residue through a N-P bond.

It carries out the reaction [phosphate](n) + ATP = [phosphate](n+1) + ADP. Its function is as follows. Catalyzes the reversible transfer of the terminal phosphate of ATP to form a long-chain polyphosphate (polyP). The polypeptide is Polyphosphate kinase (Xylella fastidiosa (strain Temecula1 / ATCC 700964)).